The chain runs to 433 residues: Serine--tRNA ligase (433 aa).

235–237 (TSE) lines the L-serine pocket. 266–268 (RSE) is a binding site for ATP. Glu-289 contributes to the L-serine binding site. An ATP-binding site is contributed by 353-356 (EISS). Position 388 (Ser-388) interacts with L-serine.

Belongs to the class-II aminoacyl-tRNA synthetase family. Type-1 seryl-tRNA synthetase subfamily. In terms of assembly, homodimer. The tRNA molecule binds across the dimer.

Its subcellular location is the cytoplasm. The catalysed reaction is tRNA(Ser) + L-serine + ATP = L-seryl-tRNA(Ser) + AMP + diphosphate + H(+). It carries out the reaction tRNA(Sec) + L-serine + ATP = L-seryl-tRNA(Sec) + AMP + diphosphate + H(+). It participates in aminoacyl-tRNA biosynthesis; selenocysteinyl-tRNA(Sec) biosynthesis; L-seryl-tRNA(Sec) from L-serine and tRNA(Sec): step 1/1. Its function is as follows. Catalyzes the attachment of serine to tRNA(Ser). Is also able to aminoacylate tRNA(Sec) with serine, to form the misacylated tRNA L-seryl-tRNA(Sec), which will be further converted into selenocysteinyl-tRNA(Sec). This is Serine--tRNA ligase from Burkholderia pseudomallei (strain 668).